The following is a 306-amino-acid chain: D-alanine--D-alanine ligase (306 aa).

Residues 107 to 300 (KEAYRAAGLP…FGQLCAWMVE (194 aa)) enclose the ATP-grasp domain. 134–184 (MQPPYVVKPYNEGSSVGVYIVTEAANGPPVLAPDLPATLMVEEYVPGRELS) contacts ATP. Residues aspartate 251, glutamate 267, and asparagine 269 each contribute to the Mg(2+) site.

This sequence belongs to the D-alanine--D-alanine ligase family. Mg(2+) serves as cofactor. The cofactor is Mn(2+).

The protein localises to the cytoplasm. It carries out the reaction 2 D-alanine + ATP = D-alanyl-D-alanine + ADP + phosphate + H(+). It participates in cell wall biogenesis; peptidoglycan biosynthesis. Cell wall formation. This is D-alanine--D-alanine ligase from Ruegeria pomeroyi (strain ATCC 700808 / DSM 15171 / DSS-3) (Silicibacter pomeroyi).